The chain runs to 225 residues: 3-dehydroquinate dehydratase (225 aa).

3-dehydroquinate-binding positions include Ser-6, 30–32 (EWR), and Arg-62. His-118 functions as the Proton donor/acceptor in the catalytic mechanism. Residue Lys-143 is the Schiff-base intermediate with substrate of the active site. Residues Arg-186, Ser-205, and Gln-209 each coordinate 3-dehydroquinate.

This sequence belongs to the type-I 3-dehydroquinase family. Homodimer.

The catalysed reaction is 3-dehydroquinate = 3-dehydroshikimate + H2O. Its pathway is metabolic intermediate biosynthesis; chorismate biosynthesis; chorismate from D-erythrose 4-phosphate and phosphoenolpyruvate: step 3/7. In terms of biological role, involved in the third step of the chorismate pathway, which leads to the biosynthesis of aromatic amino acids. Catalyzes the cis-dehydration of 3-dehydroquinate (DHQ) and introduces the first double bond of the aromatic ring to yield 3-dehydroshikimate. The protein is 3-dehydroquinate dehydratase of Streptococcus pneumoniae (strain Taiwan19F-14).